A 377-amino-acid polypeptide reads, in one-letter code: Histidinol-phosphate aminotransferase 2 (377 aa).

The segment at 17-44 (NLSPYVPGEQPQHDDLCKLNTNENPFPP) is disordered. Lysine 228 is subject to N6-(pyridoxal phosphate)lysine.

Belongs to the class-II pyridoxal-phosphate-dependent aminotransferase family. Histidinol-phosphate aminotransferase subfamily. As to quaternary structure, homodimer. The cofactor is pyridoxal 5'-phosphate.

It catalyses the reaction L-histidinol phosphate + 2-oxoglutarate = 3-(imidazol-4-yl)-2-oxopropyl phosphate + L-glutamate. It functions in the pathway amino-acid biosynthesis; L-histidine biosynthesis; L-histidine from 5-phospho-alpha-D-ribose 1-diphosphate: step 7/9. This Psychrobacter arcticus (strain DSM 17307 / VKM B-2377 / 273-4) protein is Histidinol-phosphate aminotransferase 2.